The primary structure comprises 190 residues: Protein GrpE (190 aa).

A compositionally biased stretch (polar residues) spans 1–18 (MTETPNTSSEEIQTSEPS). The interval 1–21 (MTETPNTSSEEIQTSEPSPDN) is disordered.

This sequence belongs to the GrpE family. As to quaternary structure, homodimer.

Its subcellular location is the cytoplasm. In terms of biological role, participates actively in the response to hyperosmotic and heat shock by preventing the aggregation of stress-denatured proteins, in association with DnaK and GrpE. It is the nucleotide exchange factor for DnaK and may function as a thermosensor. Unfolded proteins bind initially to DnaJ; upon interaction with the DnaJ-bound protein, DnaK hydrolyzes its bound ATP, resulting in the formation of a stable complex. GrpE releases ADP from DnaK; ATP binding to DnaK triggers the release of the substrate protein, thus completing the reaction cycle. Several rounds of ATP-dependent interactions between DnaJ, DnaK and GrpE are required for fully efficient folding. The polypeptide is Protein GrpE (Chlamydia trachomatis serovar A (strain ATCC VR-571B / DSM 19440 / HAR-13)).